Reading from the N-terminus, the 116-residue chain is Thioredoxin (116 aa).

The region spanning 2-113 (TDSEKSATIK…LLRELSDVVP (112 aa)) is the Thioredoxin domain. A disulfide bridge links Cys-37 with Cys-40.

This sequence belongs to the thioredoxin family.

In terms of biological role, participates in various redox reactions through the reversible oxidation of its active center dithiol to a disulfide and catalyzes dithiol-disulfide exchange reactions. This chain is Thioredoxin (trxA), found in Mycobacterium bovis (strain ATCC BAA-935 / AF2122/97).